The sequence spans 170 residues: uncharacterized protein (170 aa).

This is an uncharacterized protein from Ureaplasma parvum serovar 3 (strain ATCC 700970).